A 662-amino-acid chain; its full sequence is UvrABC system protein B (662 aa).

One can recognise a Helicase ATP-binding domain in the interval 25 to 414; sequence TGLNSKKRSQ…GTVVELIIRP (390 aa). Residue 38-45 coordinates ATP; it reads GITGSGKT. The Beta-hairpin signature appears at 91 to 114; sequence YYDYYQPESYIVRTDTFIEKDSSI. The Helicase C-terminal domain maps to 430-592; that stretch reads QVEDLISEIQ…IIPKTINRAI (163 aa). The UVR domain occupies 622 to 657; that stretch reads KAHMDKLKKEMFKAASNLEFEQAAKLRNQLKALEEA.

It belongs to the UvrB family. Forms a heterotetramer with UvrA during the search for lesions. Interacts with UvrC in an incision complex.

The protein resides in the cytoplasm. The UvrABC repair system catalyzes the recognition and processing of DNA lesions. A damage recognition complex composed of 2 UvrA and 2 UvrB subunits scans DNA for abnormalities. Upon binding of the UvrA(2)B(2) complex to a putative damaged site, the DNA wraps around one UvrB monomer. DNA wrap is dependent on ATP binding by UvrB and probably causes local melting of the DNA helix, facilitating insertion of UvrB beta-hairpin between the DNA strands. Then UvrB probes one DNA strand for the presence of a lesion. If a lesion is found the UvrA subunits dissociate and the UvrB-DNA preincision complex is formed. This complex is subsequently bound by UvrC and the second UvrB is released. If no lesion is found, the DNA wraps around the other UvrB subunit that will check the other stand for damage. The chain is UvrABC system protein B from Rickettsia prowazekii (strain Madrid E).